The chain runs to 269 residues: Phosphatidylglycerol--prolipoprotein diacylglyceryl transferase (269 aa).

The next 4 helical transmembrane spans lie at 14–34, 49–69, 89–109, and 118–138; these read IVQI…AGII, VAPE…IPMA, VFAI…GLLA, and GYSL…GQAI. An a 1,2-diacyl-sn-glycero-3-phospho-(1'-sn-glycerol)-binding site is contributed by R140. Transmembrane regions (helical) follow at residues 180 to 200, 208 to 228, and 240 to 260; these read TFLY…FVFF, GSIA…IEGL, and TAQL…WWLN.

The protein belongs to the Lgt family.

The protein resides in the cell inner membrane. The catalysed reaction is L-cysteinyl-[prolipoprotein] + a 1,2-diacyl-sn-glycero-3-phospho-(1'-sn-glycerol) = an S-1,2-diacyl-sn-glyceryl-L-cysteinyl-[prolipoprotein] + sn-glycerol 1-phosphate + H(+). The protein operates within protein modification; lipoprotein biosynthesis (diacylglyceryl transfer). Its function is as follows. Catalyzes the transfer of the diacylglyceryl group from phosphatidylglycerol to the sulfhydryl group of the N-terminal cysteine of a prolipoprotein, the first step in the formation of mature lipoproteins. The sequence is that of Phosphatidylglycerol--prolipoprotein diacylglyceryl transferase from Gloeobacter violaceus (strain ATCC 29082 / PCC 7421).